The chain runs to 361 residues: MSFNTFGHMFRVTTFGESHGVAIGCVVDGCPPLIPLTEADIQGDLDRRRPGQSRFTTQRQEADQVKIVSGVMAHPESGAQVTTGTPIALMIENTDQRSKDYSDIKDKYRPGHADFTYEAKYGIRDYRGGGRSSARETASRVAAGAIARKVITGMSVRGALVQIGPHKIDREKWDWDEIGNNPFFCPDKDAASVWEAYLDGIRKSGSSIGAVIEVIAEGVPAGLGAPIYAKLDGDIAAALMSINAVKGVEIGDGFATAALTGEENADEMRMGNHGPAFLSNHAGGILGGISTGQPVVARFAVKPTSSILSPRRTVDREGHDTDILTKGRHDPCVGIRAVPVGEAMVACVLADHLLRHRGQVG.

2 residues coordinate NADP(+): Arg48 and Arg54. Residues Arg131–Ser133, Asn243–Ala244, Gly287, Lys302–Ser306, and Arg328 each bind FMN.

It belongs to the chorismate synthase family. In terms of assembly, homotetramer. The cofactor is FMNH2.

The catalysed reaction is 5-O-(1-carboxyvinyl)-3-phosphoshikimate = chorismate + phosphate. It functions in the pathway metabolic intermediate biosynthesis; chorismate biosynthesis; chorismate from D-erythrose 4-phosphate and phosphoenolpyruvate: step 7/7. Its function is as follows. Catalyzes the anti-1,4-elimination of the C-3 phosphate and the C-6 proR hydrogen from 5-enolpyruvylshikimate-3-phosphate (EPSP) to yield chorismate, which is the branch point compound that serves as the starting substrate for the three terminal pathways of aromatic amino acid biosynthesis. This reaction introduces a second double bond into the aromatic ring system. This is Chorismate synthase from Rhodopseudomonas palustris (strain BisB5).